A 408-amino-acid polypeptide reads, in one-letter code: LysM domain-containing protein ARB_01488 (408 aa).

An N-terminal signal peptide occupies residues 1–17 (MVKYALLPLVAVSLVQA). Residues 42-91 (SWINVVDASGKLTCDAFLDTINVAKRQFIFWNPQLNSDCSNIQSKASYCA) enclose the LysM 1 domain. A disordered region spans residues 98–178 (SKQTRGQMDP…HGPKEAPPPD (81 aa)). Residues 106–116 (DPPPKTKPLPP) are compositionally biased toward pro residues. LysM domains follow at residues 270–320 (QYHT…RVCV) and 360–406 (SFEL…YACV).

The protein localises to the secreted. Its function is as follows. Might have a role in sequestration of chitin oligosaccharides (breakdown products of fungal cell walls that are released during invasion and act as triggers of host immunity) to dampen host defense. In Arthroderma benhamiae (strain ATCC MYA-4681 / CBS 112371) (Trichophyton mentagrophytes), this protein is LysM domain-containing protein ARB_01488.